The chain runs to 185 residues: MKLIGITGMPGSGKSAIINLAKENNIPVVSMGDIVRHETLKQGLILNPENVGKTAIFLRKLHGKEAIVVPCLKYIFEKYKNEKFVVIEGIRSIYEVNYLKKHVFLEIIAIHSSPKTRFERLSARNREDDSNSLDTFIERDNRELDFSIGSVISLADYVVVNEEEYDKFLENLNSLLKKIIMNVDE.

8–15 (GMPGSGKS) lines the ATP pocket.

The protein belongs to the UPF0200 family.

The sequence is that of UPF0200 protein Mevan_0592 from Methanococcus vannielii (strain ATCC 35089 / DSM 1224 / JCM 13029 / OCM 148 / SB).